The primary structure comprises 386 residues: Acetate kinase (386 aa).

A Mg(2+)-binding site is contributed by N7. Residue K14 coordinates ATP. R78 is a binding site for substrate. The active-site Proton donor/acceptor is the D135. Residues 195-199 (HLGNG), 268-270 (DMR), and 316-320 (GIGEN) each bind ATP. Residue E370 coordinates Mg(2+).

Belongs to the acetokinase family. In terms of assembly, homodimer. Mg(2+) serves as cofactor. Mn(2+) is required as a cofactor.

It localises to the cytoplasm. It catalyses the reaction acetate + ATP = acetyl phosphate + ADP. Its pathway is metabolic intermediate biosynthesis; acetyl-CoA biosynthesis; acetyl-CoA from acetate: step 1/2. Functionally, catalyzes the formation of acetyl phosphate from acetate and ATP. Can also catalyze the reverse reaction. The sequence is that of Acetate kinase from Arthrobacter sp. (strain FB24).